Here is a 406-residue protein sequence, read N- to C-terminus: Lissencephaly-1 homolog (406 aa).

The region spanning 7 to 39 (QREELNKAIADYLRSNGYESALEAFQKEAEMPG) is the LisH domain. Residues 54–81 (TSVIRLQKKVMDLEAKLAEAEKEFQSGG) adopt a coiled-coil conformation. The segment covering 74–89 (EKEFQSGGPNKKERSP) has biased composition (basic and acidic residues). The segment at 74 to 99 (EKEFQSGGPNKKERSPSEWIPRPPAR) is disordered. 7 WD repeats span residues 104–145 (GHRS…RTLK), 146–185 (GHTD…NIKT), 188–227 (GHDH…CVKT), 230–269 (GHRE…CKAE), 272–329 (EHEH…CIMT), 332–371 (GHDN…CQKT), and 374–406 (AHQH…WECR).

It belongs to the WD repeat LIS1/nudF family.

The protein localises to the cytoplasm. The protein resides in the cytoskeleton. It localises to the microtubule organizing center. It is found in the centrosome. Positively regulates the activity of the minus-end directed microtubule motor protein dynein. May enhance dynein-mediated microtubule sliding by targeting dynein to the microtubule plus end. Required for several dynein- and microtubule-dependent processes. This chain is Lissencephaly-1 homolog, found in Branchiostoma floridae (Florida lancelet).